Here is a 134-residue protein sequence, read N- to C-terminus: MPDTLELEVATPERELVREQVTEVQVPAAQGYLGVLPGHAPLLGLLGIGTLTYMVGGNKRHISVHGGFLEVLEDHVRVLADVAERAEEIDIQRAKAALERSQREALNPALGVDPAEALAATMRAEARLATADKK.

The protein belongs to the ATPase epsilon chain family. In terms of assembly, F-type ATPases have 2 components, CF(1) - the catalytic core - and CF(0) - the membrane proton channel. CF(1) has five subunits: alpha(3), beta(3), gamma(1), delta(1), epsilon(1). CF(0) has three main subunits: a, b and c.

The protein localises to the cell inner membrane. In terms of biological role, produces ATP from ADP in the presence of a proton gradient across the membrane. This is ATP synthase epsilon chain from Solibacter usitatus (strain Ellin6076).